The following is a 258-amino-acid chain: Imidazole glycerol phosphate synthase subunit HisF (258 aa).

Active-site residues include D11 and D130.

It belongs to the HisA/HisF family. Heterodimer of HisH and HisF.

It localises to the cytoplasm. It catalyses the reaction 5-[(5-phospho-1-deoxy-D-ribulos-1-ylimino)methylamino]-1-(5-phospho-beta-D-ribosyl)imidazole-4-carboxamide + L-glutamine = D-erythro-1-(imidazol-4-yl)glycerol 3-phosphate + 5-amino-1-(5-phospho-beta-D-ribosyl)imidazole-4-carboxamide + L-glutamate + H(+). Its pathway is amino-acid biosynthesis; L-histidine biosynthesis; L-histidine from 5-phospho-alpha-D-ribose 1-diphosphate: step 5/9. IGPS catalyzes the conversion of PRFAR and glutamine to IGP, AICAR and glutamate. The HisF subunit catalyzes the cyclization activity that produces IGP and AICAR from PRFAR using the ammonia provided by the HisH subunit. This chain is Imidazole glycerol phosphate synthase subunit HisF, found in Xanthomonas campestris pv. campestris (strain B100).